Reading from the N-terminus, the 367-residue chain is Protein RecA (367 aa).

An ATP-binding site is contributed by 73–80 (GPESSGKT). Positions 345–367 (DEPVAKKASAKESKEAKELKEVE) are disordered.

This sequence belongs to the RecA family.

It localises to the cytoplasm. Can catalyze the hydrolysis of ATP in the presence of single-stranded DNA, the ATP-dependent uptake of single-stranded DNA by duplex DNA, and the ATP-dependent hybridization of homologous single-stranded DNAs. It interacts with LexA causing its activation and leading to its autocatalytic cleavage. The chain is Protein RecA from Herminiimonas arsenicoxydans.